Consider the following 78-residue polypeptide: DNA-directed RNA polymerase subunit Rpo5 (78 aa).

It belongs to the archaeal Rpo5/eukaryotic RPB5 RNA polymerase subunit family. In terms of assembly, part of the RNA polymerase complex.

The protein resides in the cytoplasm. It carries out the reaction RNA(n) + a ribonucleoside 5'-triphosphate = RNA(n+1) + diphosphate. DNA-dependent RNA polymerase (RNAP) catalyzes the transcription of DNA into RNA using the four ribonucleoside triphosphates as substrates. This is DNA-directed RNA polymerase subunit Rpo5 from Methanococcoides burtonii (strain DSM 6242 / NBRC 107633 / OCM 468 / ACE-M).